The chain runs to 407 residues: 1-deoxy-D-xylulose 5-phosphate reductoisomerase (407 aa).

6 residues coordinate NADPH: threonine 25, glycine 26, serine 27, isoleucine 28, asparagine 53, and asparagine 136. Lysine 137 contributes to the 1-deoxy-D-xylulose 5-phosphate binding site. Glutamate 138 serves as a coordination point for NADPH. Aspartate 162 provides a ligand contact to Mn(2+). 1-deoxy-D-xylulose 5-phosphate-binding residues include serine 163, glutamate 164, serine 188, and histidine 211. A Mn(2+)-binding site is contributed by glutamate 164. Glycine 217 is a binding site for NADPH. Serine 224, asparagine 229, lysine 230, and glutamate 233 together coordinate 1-deoxy-D-xylulose 5-phosphate. Mn(2+) is bound at residue glutamate 233.

It belongs to the DXR family. Mg(2+) serves as cofactor. It depends on Mn(2+) as a cofactor.

The enzyme catalyses 2-C-methyl-D-erythritol 4-phosphate + NADP(+) = 1-deoxy-D-xylulose 5-phosphate + NADPH + H(+). It functions in the pathway isoprenoid biosynthesis; isopentenyl diphosphate biosynthesis via DXP pathway; isopentenyl diphosphate from 1-deoxy-D-xylulose 5-phosphate: step 1/6. Its function is as follows. Catalyzes the NADPH-dependent rearrangement and reduction of 1-deoxy-D-xylulose-5-phosphate (DXP) to 2-C-methyl-D-erythritol 4-phosphate (MEP). This Bradyrhizobium sp. (strain ORS 278) protein is 1-deoxy-D-xylulose 5-phosphate reductoisomerase.